The sequence spans 32 residues: Calcitonin (32 aa).

A disulfide bond links Cys-1 and Cys-7. Proline amide is present on Pro-32.

The protein belongs to the calcitonin family.

It localises to the secreted. Calcitonin is a peptide hormone that causes a rapid but short-lived drop in the level of calcium and phosphate in blood by promoting the incorporation of those ions in the bones. Calcitonin function is mediated by the calcitonin receptor/CALCR and the CALCR-RAMP2 (AMYR2) receptor complex. In Bos taurus (Bovine), this protein is Calcitonin (CALCA).